Reading from the N-terminus, the 303-residue chain is Nitrogenase iron protein (303 aa).

Residue 11 to 18 (GKGGIGKS) coordinates ATP. Cys-112 serves as a coordination point for [4Fe-4S] cluster. Position 115 is an ADP-ribosylarginine; by dinitrogenase reductase ADP-ribosyltransferase (Arg-115). Residue Cys-147 coordinates [4Fe-4S] cluster.

This sequence belongs to the NifH/BchL/ChlL family. In terms of assembly, homodimer. Requires [4Fe-4S] cluster as cofactor. The reversible ADP-ribosylation of Arg-115 inactivates the nitrogenase reductase and regulates nitrogenase activity.

It carries out the reaction N2 + 8 reduced [2Fe-2S]-[ferredoxin] + 16 ATP + 16 H2O = H2 + 8 oxidized [2Fe-2S]-[ferredoxin] + 2 NH4(+) + 16 ADP + 16 phosphate + 6 H(+). Functionally, the key enzymatic reactions in nitrogen fixation are catalyzed by the nitrogenase complex, which has 2 components: the iron protein and the molybdenum-iron protein. This is Nitrogenase iron protein from Wolinella succinogenes (strain ATCC 29543 / DSM 1740 / CCUG 13145 / JCM 31913 / LMG 7466 / NCTC 11488 / FDC 602W) (Vibrio succinogenes).